The primary structure comprises 364 residues: Putative transport protein BUsg_115 (364 aa).

The next 9 helical transmembrane spans lie at 18 to 38, 40 to 60, 65 to 85, 161 to 181, 215 to 235, 243 to 263, 280 to 300, 309 to 329, and 331 to 351; these read IFII…ILGF, WASM…KFLG, VAVI…IVFL, GLFI…YWNG, ALGV…GLLI, LLMI…PILI, LLLI…PFFI, FLIL…GLFI, and PVVL…ISIA.

This sequence belongs to the autoinducer-2 exporter (AI-2E) (TC 2.A.86) family.

It is found in the cell membrane. The polypeptide is Putative transport protein BUsg_115 (Buchnera aphidicola subsp. Schizaphis graminum (strain Sg)).